We begin with the raw amino-acid sequence, 687 residues long: Glycine--tRNA ligase beta subunit (687 aa).

This sequence belongs to the class-II aminoacyl-tRNA synthetase family. Tetramer of two alpha and two beta subunits.

The protein localises to the cytoplasm. It catalyses the reaction tRNA(Gly) + glycine + ATP = glycyl-tRNA(Gly) + AMP + diphosphate. The polypeptide is Glycine--tRNA ligase beta subunit (Neisseria gonorrhoeae (strain ATCC 700825 / FA 1090)).